The primary structure comprises 1218 residues: Mgp-operon protein 3 (1218 aa).

Residues M1–A25 form the signal peptide. Disordered stretches follow at residues Q109–N129, H213–L245, E262–S353, and Q411–T440. Residues N116 to N129 are compositionally biased toward low complexity. Over residues G217–L231 the composition is skewed to polar residues. Residues D265–A286 are compositionally biased toward basic and acidic residues. Positions A301–N342 are enriched in low complexity. Over residues Q411 to G428 the composition is skewed to polar residues. Residues V1121 to P1141 traverse the membrane as a helical segment. A compositionally biased stretch (low complexity) spans N1192–A1204. The segment at N1192–A1218 is disordered. The segment covering P1205–A1218 has biased composition (pro residues).

The protein localises to the cell membrane. The polypeptide is Mgp-operon protein 3 (Mycoplasma pneumoniae (strain ATCC 29342 / M129 / Subtype 1) (Mycoplasmoides pneumoniae)).